The following is a 1070-amino-acid chain: Phosphatidylinositol 4,5-bisphosphate 3-kinase catalytic subunit beta isoform (1070 aa).

Residues 26–115 (SDGSIPVDFL…LPVLKLVTRS (90 aa)) form the PI3K-ABD domain. The PI3K-RBD domain occupies 194 to 285 (GGKLIVAVHF…RALPHFILVE (92 aa)). Position 324 is a phosphoserine (S324). The 170-residue stretch at 327–496 (WENNNPFQIV…NATALHVKFP (170 aa)) folds into the C2 PI3K-type domain. The short motif at 410-418 (KVKTKKSTK) is the Nuclear localization signal element. Residues 524–701 (ANVSSRGGKK…GVILEAYCRG (178 aa)) form the PIK helical domain. In terms of domain architecture, PI3K/PI4K catalytic spans 772–1053 (YVEKCKYMDS…KFDEALRESW (282 aa)). A G-loop region spans residues 778 to 784 (YMDSKMK). Positions 916–924 (GIGDRHSDN) are catalytic loop. Positions 935–961 (HIDFGHILGNFKSKFGIKRERVPFILT) are activation loop. Phosphoserine; by autocatalysis is present on S1070.

It belongs to the PI3/PI4-kinase family. In terms of assembly, heterodimer of a catalytic subunit PIK3CB and a p85 regulatory subunit (PIK3R1, PIK3R2 or PIK3R3). Interaction with PIK3R2 is required for nuclear localization and nuclear export. Part of a complex with PIK3R1 and PTEN. Binding to PTEN may antagonize the lipid kinase activity under normal growth conditions. Part of a complex involved in autophagosome formation composed of PIK3C3 and PIK3R4. Interacts with BECN1, ATG14 and RAB5A. Post-translationally, autophosphorylation at Ser-1070 negatively regulates the phosphatidylinositol-4,5-bisphosphate 3-kinase activity. In terms of tissue distribution, expressed ubiquitously.

The protein localises to the cytoplasm. It localises to the nucleus. The enzyme catalyses a 1,2-diacyl-sn-glycero-3-phospho-(1D-myo-inositol-4,5-bisphosphate) + ATP = a 1,2-diacyl-sn-glycero-3-phospho-(1D-myo-inositol-3,4,5-trisphosphate) + ADP + H(+). It carries out the reaction 1-octadecanoyl-2-(5Z,8Z,11Z,14Z)-eicosatetraenoyl-sn-glycero-3-phospho-1D-myo-inositol 4,5-bisphosphate + ATP = 1-octadecanoyl-2-(5Z,8Z,11Z,14Z-eicosatetraenoyl)-sn-glycero-3-phospho-(1D-myo-inositol 3,4,5-triphosphate) + ADP + H(+). It catalyses the reaction L-seryl-[protein] + ATP = O-phospho-L-seryl-[protein] + ADP + H(+). It participates in phospholipid metabolism; phosphatidylinositol phosphate biosynthesis. Functionally, phosphoinositide-3-kinase (PI3K) phosphorylates phosphatidylinositol derivatives at position 3 of the inositol ring to produce 3-phosphoinositides. Uses ATP and PtdIns(4,5)P2 (phosphatidylinositol 4,5-bisphosphate) to generate phosphatidylinositol 3,4,5-trisphosphate (PIP3). PIP3 plays a key role by recruiting PH domain-containing proteins to the membrane, including AKT1 and PDPK1, activating signaling cascades involved in cell growth, survival, proliferation, motility and morphology. Involved in the activation of AKT1 upon stimulation by G-protein coupled receptors (GPCRs) ligands such as CXCL12, sphingosine 1-phosphate, and lysophosphatidic acid. May also act downstream receptor tyrosine kinases. Required in different signaling pathways for stable platelet adhesion and aggregation. Plays a role in platelet activation signaling triggered by GPCRs, alpha-IIb/beta-3 integrins (ITGA2B/ ITGB3) and ITAM (immunoreceptor tyrosine-based activation motif)-bearing receptors such as GP6. Regulates the strength of adhesion of ITGA2B/ ITGB3 activated receptors necessary for the cellular transmission of contractile forces. Required for platelet aggregation induced by F2 (thrombin) and thromboxane A2 (TXA2). Has a role in cell survival. May have a role in cell migration. Involved in the early stage of autophagosome formation. Modulates the intracellular level of PtdIns3P (phosphatidylinositol 3-phosphate) and activates PIK3C3 kinase activity. May act as a scaffold, independently of its lipid kinase activity to positively regulate autophagy. May have a role in insulin signaling as scaffolding protein in which the lipid kinase activity is not required. May have a kinase-independent function in regulating cell proliferation and in clathrin-mediated endocytosis. Mediator of oncogenic signal in cell lines lacking PTEN. The lipid kinase activity is necessary for its role in oncogenic transformation. Required for the growth of ERBB2 and RAS driven tumors. Also has a protein kinase activity showing autophosphorylation. This is Phosphatidylinositol 4,5-bisphosphate 3-kinase catalytic subunit beta isoform (PIK3CB) from Homo sapiens (Human).